A 90-amino-acid chain; its full sequence is Acylphosphatase (90 aa).

An Acylphosphatase-like domain is found at 4–90; it reads RMYVKVYGIV…KGEFNNFDTY (87 aa). Catalysis depends on residues Arg-19 and Asn-37.

This sequence belongs to the acylphosphatase family.

It carries out the reaction an acyl phosphate + H2O = a carboxylate + phosphate + H(+). The sequence is that of Acylphosphatase (acyP) from Sulfurisphaera tokodaii (strain DSM 16993 / JCM 10545 / NBRC 100140 / 7) (Sulfolobus tokodaii).